A 265-amino-acid polypeptide reads, in one-letter code: Probable DNA replication complex GINS protein PSF3 (265 aa).

The tract at residues 180–265 is disordered; sequence ISTSSNNKNN…KKRKRMFDDE (86 aa). Positions 183–246 are enriched in low complexity; it reads SSNNKNNSSN…NNNNNSQNSS (64 aa). Positions 255–265 are enriched in basic residues; that stretch reads VKKRKRMFDDE.

Belongs to the GINS3/PSF3 family. In terms of assembly, component of the GINS complex which is a heterotetramer of gins1, gins2, gins3 and gins4.

The protein localises to the nucleus. Its function is as follows. The GINS complex plays an essential role in the initiation of DNA replication. The polypeptide is Probable DNA replication complex GINS protein PSF3 (gins3) (Dictyostelium discoideum (Social amoeba)).